Consider the following 921-residue polypeptide: Protein translocase subunit SecA (921 aa).

ATP-binding positions include Gln-87, 105-109 (GEGKT), and Asp-515. The disordered stretch occupies residues 872–901 (DMEVAGSTGDRGAALDIQPAPVRSGPKIGR). Zn(2+) contacts are provided by Cys-905, Cys-907, Cys-916, and Cys-917.

It belongs to the SecA family. Monomer and homodimer. Part of the essential Sec protein translocation apparatus which comprises SecA, SecYEG and auxiliary proteins SecDF-YajC and YidC. Zn(2+) serves as cofactor.

The protein localises to the cell inner membrane. Its subcellular location is the cytoplasm. It carries out the reaction ATP + H2O + cellular proteinSide 1 = ADP + phosphate + cellular proteinSide 2.. Functionally, part of the Sec protein translocase complex. Interacts with the SecYEG preprotein conducting channel. Has a central role in coupling the hydrolysis of ATP to the transfer of proteins into and across the cell membrane, serving both as a receptor for the preprotein-SecB complex and as an ATP-driven molecular motor driving the stepwise translocation of polypeptide chains across the membrane. In Polynucleobacter asymbioticus (strain DSM 18221 / CIP 109841 / QLW-P1DMWA-1) (Polynucleobacter necessarius subsp. asymbioticus), this protein is Protein translocase subunit SecA.